Reading from the N-terminus, the 866-residue chain is Phospholipase D gamma 3 (866 aa).

Positions 31 to 170 (PFDTSSGSLR…CSGNRIEGLF (140 aa)) constitute a C2 domain. A Ca(2+)-binding site is contributed by aspartate 232. Positions 371 to 406 (TIYTHHQKTMIVDAEAAQNRRKIVAFVGGLDLCNGR) constitute a PLD phosphodiesterase 1 domain. Catalysis depends on residues histidine 376, lysine 378, and aspartate 383. Histidine 376 serves as a coordination point for a 1,2-diacyl-sn-glycero-3-phosphate. Ca(2+) is bound by residues histidine 412 and histidine 444. A 1,2-diacyl-sn-glycero-3-phosphate is bound at residue glutamine 572. A Phosphoserine modification is found at serine 692. The region spanning 712–739 (FMIYVHSKGMVVDDEFVLIGSANINQRS) is the PLD phosphodiesterase 2 domain. Residues histidine 717, lysine 719, and aspartate 724 contribute to the active site. Residue histidine 717 coordinates a 1,2-diacyl-sn-glycero-3-phosphate. Ca(2+) is bound at residue glutamate 780.

It belongs to the phospholipase D family. C2-PLD subfamily. Requires Ca(2+) as cofactor. In terms of tissue distribution, highly expressed in inflorescences and old leaves, moderately in stems, roots, siliques and young leaves and low in flowers.

The protein resides in the cytoplasm. It is found in the membrane. It catalyses the reaction a 1,2-diacyl-sn-glycero-3-phosphocholine + H2O = a 1,2-diacyl-sn-glycero-3-phosphate + choline + H(+). With respect to regulation, inhibited by neomycin. Functionally, hydrolyzes glycerol-phospholipids at the terminal phosphodiesteric bond to generate phosphatidic acids (PA). Plays an important role in various cellular processes, including phytohormone action, vesicular trafficking, secretion, cytoskeletal arrangement, meiosis, tumor promotion, pathogenesis, membrane deterioration and senescence. Can use phosphatidylserine but prefers ethanolamine-containing lipids as substrates. The polypeptide is Phospholipase D gamma 3 (Arabidopsis thaliana (Mouse-ear cress)).